The chain runs to 242 residues: 3-deoxy-manno-octulosonate cytidylyltransferase (242 aa).

Belongs to the KdsB family.

It localises to the cytoplasm. It catalyses the reaction 3-deoxy-alpha-D-manno-oct-2-ulosonate + CTP = CMP-3-deoxy-beta-D-manno-octulosonate + diphosphate. The protein operates within nucleotide-sugar biosynthesis; CMP-3-deoxy-D-manno-octulosonate biosynthesis; CMP-3-deoxy-D-manno-octulosonate from 3-deoxy-D-manno-octulosonate and CTP: step 1/1. It participates in bacterial outer membrane biogenesis; lipopolysaccharide biosynthesis. Activates KDO (a required 8-carbon sugar) for incorporation into bacterial lipopolysaccharide in Gram-negative bacteria. The chain is 3-deoxy-manno-octulosonate cytidylyltransferase from Mesorhizobium japonicum (strain LMG 29417 / CECT 9101 / MAFF 303099) (Mesorhizobium loti (strain MAFF 303099)).